Reading from the N-terminus, the 1342-residue chain is DNA-directed RNA polymerase subunit beta (1342 aa).

The protein belongs to the RNA polymerase beta chain family. The RNAP catalytic core consists of 2 alpha, 1 beta, 1 beta' and 1 omega subunit. When a sigma factor is associated with the core the holoenzyme is formed, which can initiate transcription.

It carries out the reaction RNA(n) + a ribonucleoside 5'-triphosphate = RNA(n+1) + diphosphate. Functionally, DNA-dependent RNA polymerase catalyzes the transcription of DNA into RNA using the four ribonucleoside triphosphates as substrates. The chain is DNA-directed RNA polymerase subunit beta from Vibrio vulnificus (strain CMCP6).